The primary structure comprises 341 residues: S-adenosylmethionine:tRNA ribosyltransferase-isomerase (341 aa).

It belongs to the QueA family. As to quaternary structure, monomer.

The protein resides in the cytoplasm. The catalysed reaction is 7-aminomethyl-7-carbaguanosine(34) in tRNA + S-adenosyl-L-methionine = epoxyqueuosine(34) in tRNA + adenine + L-methionine + 2 H(+). It functions in the pathway tRNA modification; tRNA-queuosine biosynthesis. Its function is as follows. Transfers and isomerizes the ribose moiety from AdoMet to the 7-aminomethyl group of 7-deazaguanine (preQ1-tRNA) to give epoxyqueuosine (oQ-tRNA). The sequence is that of S-adenosylmethionine:tRNA ribosyltransferase-isomerase from Pelodictyon phaeoclathratiforme (strain DSM 5477 / BU-1).